The following is a 282-amino-acid chain: Para-Rep C2 (282 aa).

A CRESS-DNA virus Rep endonuclease domain is found at 1–99 (MASKRWCFTL…ETLIAEIGAP (99 aa)). The short motif at 7–10 (CFTL) is the RCR-1 element. Residues glutamate 38 and histidine 47 each coordinate a divalent metal cation. The RCR-2 signature appears at 47-49 (HLQ). The Nuclear localization signal signature appears at 56 to 77 (KLIRLGGLKKKFGSIAHWEIAK). Tyrosine 86 (for DNA cleavage activity) is an active-site residue. The RCR-3 motif lies at 86 to 89 (YCTK). The short motif at 99–105 (PVKKGSN) is the Nuclear localization signal element. 174–182 (GPDGGEGKS) provides a ligand contact to ATP.

It belongs to the nanoviridea/circoviridae replication-associated protein family. Homooligomer (Potential). Rep binds to repeated DNA motifs (iterons). It depends on Mg(2+) as a cofactor. Mn(2+) is required as a cofactor.

Its subcellular location is the host nucleus. The enzyme catalyses ATP + H2O = ADP + phosphate + H(+). Initiates and terminates the replication only of its own subviral DNA molecule. The closed circular ssDNA genome is first converted to a superhelical dsDNA. Rep binds a specific hairpin at the genome origin of replication. Introduces an endonucleolytic nick within the intergenic region of the genome, thereby initiating the rolling circle replication (RCR). Following cleavage, binds covalently to the 5'-phosphate of DNA as a tyrosyl ester. The cleavage gives rise to a free 3'-OH that serves as a primer for the cellular DNA polymerase. The polymerase synthesizes the (+) strand DNA by rolling circle mechanism. After one round of replication, a Rep-catalyzed nucleotidyl transfer reaction releases a circular single-stranded virus genome, thereby terminating the replication. Displays origin-specific DNA cleavage, nucleotidyl transferase, ATPase and helicase activities. In Milk vetch dwarf C2 alphasatellite (MVDC2A), this protein is Para-Rep C2 (C2).